Here is a 198-residue protein sequence, read N- to C-terminus: Elongation factor Ts (198 aa).

Residues 81-84 form an involved in Mg(2+) ion dislocation from EF-Tu region; it reads TDFV.

It belongs to the EF-Ts family.

Its subcellular location is the cytoplasm. Associates with the EF-Tu.GDP complex and induces the exchange of GDP to GTP. It remains bound to the aminoacyl-tRNA.EF-Tu.GTP complex up to the GTP hydrolysis stage on the ribosome. The sequence is that of Elongation factor Ts from Herpetosiphon aurantiacus (strain ATCC 23779 / DSM 785 / 114-95).